A 490-amino-acid chain; its full sequence is Colicin-10 (490 aa).

Residues Met1 to Ser20 are compositionally biased toward polar residues. 2 disordered regions span residues Met1–Gly29 and Gln146–Arg171. A compositionally biased stretch (basic and acidic residues) spans Gln146–Ala170. The helical transmembrane segment at Ile447–Ile467 threads the bilayer.

It belongs to the channel forming colicin family.

Its subcellular location is the host membrane. Its function is as follows. This colicin is a channel-forming colicin. This class of transmembrane toxins depolarize the cytoplasmic membrane, leading to dissipation of cellular energy. Colicins are polypeptide toxins produced by and active against E.coli and closely related bacteria. The polypeptide is Colicin-10 (cta) (Escherichia coli).